Consider the following 357-residue polypeptide: DnaJ homolog subfamily C member 25 (357 aa).

The chain crosses the membrane as a helical span at residues 19–39 (WLLLAPLLLVPLLVRPAEALV). The 74-residue stretch at 48–121 (DCYEVLGVSR…ETRKDYDYML (74 aa)) folds into the J domain. The next 2 membrane-spanning stretches (helical) occupy residues 147 to 167 (VVILVSVCAISVFQYFSWWNS) and 241 to 261 (LLLFQVLLAPVHLCSYIAWYC).

The protein belongs to the DNAJC25 family.

The protein resides in the membrane. This chain is DnaJ homolog subfamily C member 25 (Dnajc25), found in Rattus norvegicus (Rat).